The primary structure comprises 340 residues: Uroporphyrinogen decarboxylase (340 aa).

Substrate-binding positions include 23–27 (RQAGR), Asp72, Tyr147, Thr202, and His316.

The protein belongs to the uroporphyrinogen decarboxylase family. In terms of assembly, homodimer.

The protein localises to the cytoplasm. The enzyme catalyses uroporphyrinogen III + 4 H(+) = coproporphyrinogen III + 4 CO2. It functions in the pathway porphyrin-containing compound metabolism; protoporphyrin-IX biosynthesis; coproporphyrinogen-III from 5-aminolevulinate: step 4/4. Functionally, catalyzes the decarboxylation of four acetate groups of uroporphyrinogen-III to yield coproporphyrinogen-III. This Pelobacter propionicus (strain DSM 2379 / NBRC 103807 / OttBd1) protein is Uroporphyrinogen decarboxylase.